The following is a 563-amino-acid chain: IQCJ-SCHIP1 readthrough transcript protein (563 aa).

The 21-residue stretch at 47 to 67 (ESKVKIIQRAWREYLQRQEPL) folds into the IQ domain. Disordered stretches follow at residues 63-150 (RQEP…VSAL), 164-295 (VIDE…EPPV), 312-336 (FREQ…NERE), and 384-430 (SGSD…SLDD). The span at 76-87 (SVSSEKLSSSVS) shows a compositional bias: low complexity. The segment covering 88–97 (MNTFSDSSTP) has biased composition (polar residues). Residues 108–143 (SDAGSSSSSSRASSQSNSTKVTPCSECKSSSSPGGS) are compositionally biased toward low complexity. The span at 168–182 (WAPEEDGEEEEEEDE) shows a compositional bias: acidic residues. Composition is skewed to basic and acidic residues over residues 183–199 (RDQR…REPG) and 229–238 (HQHDPQDLRH). The residue at position 193 (serine 193) is a Phosphoserine. The span at 318-331 (RNQGQARTNSTSAQ) shows a compositional bias: polar residues. A compositionally biased stretch (basic and acidic residues) spans 385 to 399 (GSDKDSDADDSKTET). Residues 400–411 (SLDTPLSPMSKQ) show a composition bias toward polar residues. Residues 419 to 563 (DTTEEESESL…KHMAEKMPAK (145 aa)) are required for interaction with ankyrins. Positions 420–430 (TTEEESESLDD) are enriched in acidic residues. The stretch at 500–534 (IGQLQVIVNDLHSQIESLNEELVQLLLIRDELHTE) forms a coiled coil.

As to quaternary structure, homooligomer (via coiled coil domain). Interacts (via IQ domain) with calmodulin; the interaction is direct and lost in presence of calcium. Interacts with ANK3 (via ANK repeats); required for localization at axon initial segments (AIS) and nodes of Ranvier. Interacts with SPTBN4. Interacts with KCNQ2 and KCNQ3. In terms of tissue distribution, highly expressed in brain and to a lower extent in heart and kidney.

The protein localises to the cell projection. It is found in the axon. It localises to the cytoplasm. Functionally, may play a role in action potential conduction in myelinated cells through the organization of molecular complexes at nodes of Ranvier and axon initial segments. May also play a role in axon outgrowth and guidance. The polypeptide is IQCJ-SCHIP1 readthrough transcript protein (Homo sapiens (Human)).